Reading from the N-terminus, the 264-residue chain is uncharacterized protein (264 aa).

The signal sequence occupies residues 1–22 (MKSIKRIGLCISLLILIIFVTS). Residue C23 is the site of N-palmitoyl cysteine attachment. C23 is lipidated: S-diacylglycerol cysteine.

It belongs to the staphylococcal tandem lipoprotein family.

It localises to the cell membrane. This is an uncharacterized protein from Staphylococcus aureus (strain MRSA252).